Here is a 313-residue protein sequence, read N- to C-terminus: MDKKYAAARLLPPIDASYQPARSVTKIPATSSLEEILEVLERDGGVILTDFVPKETMDKIDEELEPYTKTIPDSDSYDDFIGKKTLVIAGLISKSDTLANILDTNETIDKLLKIILEERYPAVFEGHTEELVIDPLLSISMAFHVGQGSPRQALHRDDMVFSSKHHPNMKINEVDGFSCFIAGSNVTRENGGTMVILGSHKWEHDRRGRPDEVSFLEMERGSAFIFLSTMAHGAGYNTIPGEIRKIMNLVFCRGTLRQEENQFLCNPRSKVLKMSPKMQTLLGFKKPAGTWLGMVDNDDPAKDLPAIYEKIMQ.

His155, Asp157, and His232 together coordinate Fe cation.

It belongs to the PhyH family. Homodimer. Fe cation is required as a cofactor.

It functions in the pathway mycotoxin biosynthesis. Functionally, aminotransferase; part of the gene cluster that mediates the biosynthesis of swainsonine (SW), a cytotoxic fungal alkaloid and a potential cancer therapy drug. Swainsonine production occurs via a multibranched pathway and is dispensable for fungal colonization of plants and infection of insect hosts. The first step of swainsonine biosynthesis is the production of the precursor pipecolic acid (PA) via conversion of L-lysine (Lys) to 1-piperideine-6-carboxylate (P6C) by the aminotransferase swnA, the latter being further reduced to PA by the reductase swnR. The PKS-NRPS hybrid synthetase swnK uptakes and condensates PA and malonyl-CoA with and without skipping of the ketoreductase (KR) domain in order to produce 3 intermediates, 1-oxoindolizidine, (1S)-1-hydroxyindolizin, and (1R)-1-hydroxyindolizine; with the transisomer (1S)-1-hydroxyindolizin being predominant. The terminal thioester reductase (TE) domain of swnK is involved in reduction of the thioester bond to release the intermediate aldehydes. The oxidoreductase swnN could contribute to the reduction of 1-oxoindolizidine to (1S)-1-hydroxyindolizin and (1R)-1-hydroxyindolizine, contributing to the major route of SW production. The dioxygenase swnH2 would be responsible for the oxidization of (1R)-1-hydroxyindolizine into (1R,2S)-1,2-dihydroxyindolizine and of (1S)-1-hydroxyindolizin to yield both (1R,2S)-1,2-dihydroxyindolizine and (1S,2S)-1,2-dihydroxyindolizine. The dioxygenase swnH1 then performs the conversion of the 1,2-dihydroxyindolizine epimers to SW. In Arthroderma benhamiae (strain ATCC MYA-4681 / CBS 112371) (Trichophyton mentagrophytes), this protein is Dioxygenase swnH2.